The chain runs to 415 residues: Multidrug resistance protein MdtA (415 aa).

The N-terminal stretch at 1 to 21 is a signal peptide; the sequence is MKGSYKSRWVIVIVVVIAAIA. Disordered stretches follow at residues 32–60 and 392–415; these read SRSA…GPLA and EAQS…GARS. Over residues 399–415 the composition is skewed to basic and acidic residues; sequence PEEKATSREYAKKGARS.

This sequence belongs to the membrane fusion protein (MFP) (TC 8.A.1) family. Part of a tripartite efflux system composed of MdtA, MdtB and MdtC.

The protein localises to the cell inner membrane. The MdtABC tripartite complex confers resistance against novobiocin and deoxycholate. This is Multidrug resistance protein MdtA from Escherichia coli (strain K12 / MC4100 / BW2952).